We begin with the raw amino-acid sequence, 424 residues long: Endo-beta-1,4-galactanase (424 aa).

A signal peptide spans 1 to 26 (MKNVLAVFVVLIFVLGAFGTSGPAEA). 142–145 (DPAK) contributes to the substrate binding site. Residue E190 is the Proton donor of the active site. Residues 229–230 (TN) and H263 contribute to the substrate site. Catalysis depends on E288, which acts as the Nucleophile. T292 serves as a coordination point for substrate. Ca(2+) contacts are provided by D297, D299, H301, and N303. Substrate contacts are provided by K307 and D384. The Ca(2+) site is built by S392 and D395.

It belongs to the glycosyl hydrolase 53 family. It depends on Ca(2+) as a cofactor.

The enzyme catalyses The enzyme specifically hydrolyzes (1-&gt;4)-beta-D-galactosidic linkages in type I arabinogalactans.. Its function is as follows. Involved in galactan degradation. Degrades arabinose-free galactan to galactooligosaccharides, producing galactotetraose as the main product along with galactotriose, galactobiose, and galactose. May hydrolyze the beta-1,4-galactan linkages of the galactan portion of arabinogalactan type I, a pectic plant polysaccharide from which most of the arabinose has been removed. The chain is Endo-beta-1,4-galactanase (ganB) from Bacillus licheniformis (strain ATCC 14580 / DSM 13 / JCM 2505 / CCUG 7422 / NBRC 12200 / NCIMB 9375 / NCTC 10341 / NRRL NRS-1264 / Gibson 46).